Reading from the N-terminus, the 123-residue chain is Alpha-lactalbumin (123 aa).

Positions 1-123 (KQFTKCELSQ…KLEQWLCEKE (123 aa)) constitute a C-type lysozyme domain. Intrachain disulfides connect C6–C120, C28–C111, C61–C77, and C73–C91. N45 carries N-linked (GlcNAc...) asparagine glycosylation. Positions 79, 82, 84, 87, and 88 each coordinate Ca(2+).

It belongs to the glycosyl hydrolase 22 family. Lactose synthase (LS) is a heterodimer of a catalytic component, beta1,4-galactosyltransferase (beta4Gal-T1) and a regulatory component, alpha-lactalbumin (LA). In terms of tissue distribution, mammary gland specific. Secreted in milk.

The protein localises to the secreted. Regulatory subunit of lactose synthase, changes the substrate specificity of galactosyltransferase in the mammary gland making glucose a good acceptor substrate for this enzyme. This enables LS to synthesize lactose, the major carbohydrate component of milk. In other tissues, galactosyltransferase transfers galactose onto the N-acetylglucosamine of the oligosaccharide chains in glycoproteins. The polypeptide is Alpha-lactalbumin (LALBA) (Papio cynocephalus (Yellow baboon)).